The chain runs to 402 residues: Phosphoglycerate kinase (402 aa).

Substrate contacts are provided by residues 30-32 (DFN), Arg-46, 70-73 (HLGR), Arg-126, and Arg-159. Residues Lys-210, Glu-332, and 358–361 (GGDT) each bind ATP.

The protein belongs to the phosphoglycerate kinase family. As to quaternary structure, monomer.

Its subcellular location is the cytoplasm. The enzyme catalyses (2R)-3-phosphoglycerate + ATP = (2R)-3-phospho-glyceroyl phosphate + ADP. Its pathway is carbohydrate degradation; glycolysis; pyruvate from D-glyceraldehyde 3-phosphate: step 2/5. The polypeptide is Phosphoglycerate kinase (Helicobacter hepaticus (strain ATCC 51449 / 3B1)).